We begin with the raw amino-acid sequence, 241 residues long: Terpene cyclase olcD (241 aa).

A run of 7 helical transmembrane segments spans residues Leu19 to Ile39, Trp49 to Pro71, Ile76 to Ala95, Tyr108 to Ile128, Phe137 to Val157, Ser166 to Phe186, and Leu202 to Trp222.

Belongs to the paxB family.

The protein localises to the membrane. It functions in the pathway secondary metabolite biosynthesis; terpenoid biosynthesis. Its function is as follows. Terpene cyclase; part of the gene cluster that mediates the biosynthesis of 15-deoxyoxalicine B. The first step of the pathway is the synthesis of nicotinyl-CoA from nicotinic acid by the nicotinic acid-CoA ligase olcI. Nicotinyl-CoA is then a substrate of polyketide synthase olcA to produce 4-hydroxy-6-(3-pyridinyl)-2H-pyran-2-one (HPPO) which is further prenylated by the polyprenyl transferase olcH to yield geranylgeranyl-HPPO. Geranylgeranyl pyrophosphate is provided by the cluster-specific geranylgeranyl pyrophosphate synthase olcC. The FAD-dependent monooxygenase olcE catalyzes the epoxidation of geranylgeranyl-HPPO and the terpene cyclase olcD catalyzes the cyclization of the terpenoid component, resulting in the formation of the tricyclic terpene moiety seen in predecaturin E. The cytochrome P450 monooxygenase then catalyzes the allylic oxidation of predecaturin E, which is followed by spirocylization with concomitant loss of one molecule of water to form decaturin E. Decaturin E is the substrate of the cytochrome P450 monooxygenase olcJ which hydroxylates it at the C-29 position to form decaturin F. The short-chain dehydrogenase/reductase olcF may catalyze the oxidation of decaturin F to generate the 29-hydroxyl-27-one intermediate, and subsequent hemiacetal formation probably leads to the formation of decaturin C. The dioxygenase olcK may be a peroxisomal enzyme that catalyzes the hydroxylation of decaturin C into decaturin A once decaturin C is shuttled into the peroxisome by the MFS transporter olcL. Finally the cytochrome P450 monooxygenase olcB catalyzes the oxidative rearrangement to yield 15-deoxyoxalicine B. In the absence of olcJ, decaturin E may be shunted to a pathway in which it is oxidized to a ketone, possibly by olcF, to form decaturin D, which undergoes further allylic oxidation to yield decaturin G. Moreover, in the absence of oclK or oclL, oclB can convert decaturin C into 15-deoxyoxalicine A. This Penicillium canescens protein is Terpene cyclase olcD.